A 162-amino-acid chain; its full sequence is Circumsporozoite protein-related antigen (162 aa).

Residues 1–16 (MKILSVFFLALFFIIF) form the signal peptide. Disordered regions lie at residues 24–44 (KTNKGTGSGVSSKKKNKKGSG) and 109–162 (PFKI…GPEH). The span at 114–130 (SSDPADNANPDADSESN) shows a compositional bias: low complexity. Polar residues predominate over residues 137–162 (PQVTAQDVTPEQPQGDDNNLVSGPEH).

The sequence is that of Circumsporozoite protein-related antigen from Plasmodium falciparum.